The primary structure comprises 492 residues: NAD(P)H-quinone oxidoreductase subunit 2 A, chloroplastic (492 aa).

13 helical membrane-spanning segments follow: residues 6–26 (LLLF…GLIL), 39–59 (TPWL…ALLF), 81–101 (VFQF…VEYI), 106–126 (MAIT…MFLC), 131–151 (LITI…LSGY), 165–185 (YLLM…WLYG), 209–229 (PGIS…LSPA), 277–297 (WHLL…LIAI), 305–325 (MLAY…IVGD), 329–349 (GYAS…GTFA), 377–397 (ALSS…AGFF), 400–420 (LHLF…IGLL), and 466–486 (MIVC…IIAI).

It belongs to the complex I subunit 2 family. In terms of assembly, NDH is composed of at least 16 different subunits, 5 of which are encoded in the nucleus.

The protein resides in the plastid. It localises to the chloroplast thylakoid membrane. It catalyses the reaction a plastoquinone + NADH + (n+1) H(+)(in) = a plastoquinol + NAD(+) + n H(+)(out). The catalysed reaction is a plastoquinone + NADPH + (n+1) H(+)(in) = a plastoquinol + NADP(+) + n H(+)(out). In terms of biological role, NDH shuttles electrons from NAD(P)H:plastoquinone, via FMN and iron-sulfur (Fe-S) centers, to quinones in the photosynthetic chain and possibly in a chloroplast respiratory chain. The immediate electron acceptor for the enzyme in this species is believed to be plastoquinone. Couples the redox reaction to proton translocation, and thus conserves the redox energy in a proton gradient. The polypeptide is NAD(P)H-quinone oxidoreductase subunit 2 A, chloroplastic (Illicium oligandrum (Star anise)).